The primary structure comprises 100 residues: Small ribosomal subunit protein uS14c (100 aa).

Belongs to the universal ribosomal protein uS14 family. Part of the 30S ribosomal subunit.

The protein resides in the plastid. It is found in the chloroplast. Binds 16S rRNA, required for the assembly of 30S particles. This is Small ribosomal subunit protein uS14c from Aethionema cordifolium (Lebanon stonecress).